A 109-amino-acid polypeptide reads, in one-letter code: MFTKGGLGNLMKQAQQMQEKMAKIQEEIAQMEVTGEAGAGLVKVTINGAHNCRRVEVDPSLLQDDKDMLEDLAAAAFNDATRRISEVQKKKMSAISTGMQLPNGFNMPV.

This sequence belongs to the YbaB/EbfC family. Homodimer.

Its subcellular location is the cytoplasm. It localises to the nucleoid. Binds to DNA and alters its conformation. May be involved in regulation of gene expression, nucleoid organization and DNA protection. This Buchnera aphidicola subsp. Acyrthosiphon pisum (strain APS) (Acyrthosiphon pisum symbiotic bacterium) protein is Nucleoid-associated protein BU482.